The sequence spans 130 residues: Glycine cleavage system H protein (130 aa).

The region spanning 22-103 (KAYIGISDCA…PYGSWIAAIE (82 aa)) is the Lipoyl-binding domain. The residue at position 63 (lysine 63) is an N6-lipoyllysine.

The protein belongs to the GcvH family. In terms of assembly, the glycine cleavage system is composed of four proteins: P, T, L and H. Requires (R)-lipoate as cofactor.

Its function is as follows. The glycine cleavage system catalyzes the degradation of glycine. The H protein shuttles the methylamine group of glycine from the P protein to the T protein. This chain is Glycine cleavage system H protein, found in Clostridium botulinum (strain Okra / Type B1).